The primary structure comprises 249 residues: General transcription factor IIF subunit 2 (249 aa).

A2 carries the post-translational modification N-acetylalanine. An N6-acetyllysine mark is found at K22, K33, and K137. S142 carries the phosphoserine modification. The DNA site is built by G227 and H229. S248 carries the post-translational modification Phosphoserine.

Belongs to the TFIIF beta subunit family. Heterodimer of an alpha and a beta subunit. Interacts with HTATSF1 and GPBP1. Interacts with URI1. Interacts with GTF2B (via N-terminus); this interaction is inhibited in presence of GTF2F1. Part of TBP-based Pol II pre-initiation complex (PIC), in which Pol II core assembles with general transcription factors and other specific initiation factors including GTF2E1, GTF2E2, GTF2F1, GTF2F2, TCEA1, ERCC2, ERCC3, GTF2H2, GTF2H3, GTF2H4, GTF2H5, GTF2A1, GTF2A2, GTF2B and TBP; this large multi-subunit PIC complex mediates DNA unwinding and targets Pol II core to the transcription start site where the first phosphodiester bond forms.

Its subcellular location is the nucleus. In terms of biological role, TFIIF is a general transcription initiation factor that binds to RNA polymerase II and helps to recruit it to the initiation complex in collaboration with TFIIB. This Homo sapiens (Human) protein is General transcription factor IIF subunit 2 (GTF2F2).